Consider the following 511-residue polypeptide: Coatomer subunit delta (511 aa).

Residues Gln-168 to Gly-177 show a composition bias toward basic and acidic residues. Residues Gln-168–Ser-188 are disordered. At Ser-223 the chain carries Phosphoserine. N6-acetyllysine occurs at positions 233 and 241. Position 244 is a phosphoserine (Ser-244). The MHD domain maps to Met-271–Leu-511. Lys-309 and Lys-351 each carry N6-acetyllysine. Ser-493 is modified (phosphoserine).

It belongs to the adaptor complexes medium subunit family. Delta-COP subfamily. As to quaternary structure, oligomeric complex that consists of at least the alpha, beta, beta', gamma, delta, epsilon and zeta subunits. As to expression, ubiquitously expressed.

The protein resides in the cytoplasm. Its subcellular location is the golgi apparatus membrane. It localises to the cytoplasmic vesicle. It is found in the COPI-coated vesicle membrane. Its function is as follows. Component of the coatomer, a cytosolic protein complex that binds to dilysine motifs and reversibly associates with Golgi non-clathrin-coated vesicles, which further mediate biosynthetic protein transport from the ER, via the Golgi up to the trans Golgi network. The coatomer complex is required for budding from Golgi membranes, and is essential for the retrograde Golgi-to-ER transport of dilysine-tagged proteins. In mammals, the coatomer can only be recruited by membranes associated to ADP-ribosylation factors (ARFs), which are small GTP-binding proteins; the complex also influences the Golgi structural integrity, as well as the processing, activity, and endocytic recycling of LDL receptors. The sequence is that of Coatomer subunit delta (ARCN1) from Homo sapiens (Human).